The following is a 256-amino-acid chain: Thiazole synthase (256 aa).

Residue lysine 95 is the Schiff-base intermediate with DXP of the active site. Residues glycine 156, 182-183, and 204-205 contribute to the 1-deoxy-D-xylulose 5-phosphate site; these read AG and NT.

This sequence belongs to the ThiG family. As to quaternary structure, homotetramer. Forms heterodimers with either ThiH or ThiS.

It localises to the cytoplasm. It carries out the reaction [ThiS sulfur-carrier protein]-C-terminal-Gly-aminoethanethioate + 2-iminoacetate + 1-deoxy-D-xylulose 5-phosphate = [ThiS sulfur-carrier protein]-C-terminal Gly-Gly + 2-[(2R,5Z)-2-carboxy-4-methylthiazol-5(2H)-ylidene]ethyl phosphate + 2 H2O + H(+). It functions in the pathway cofactor biosynthesis; thiamine diphosphate biosynthesis. Its function is as follows. Catalyzes the rearrangement of 1-deoxy-D-xylulose 5-phosphate (DXP) to produce the thiazole phosphate moiety of thiamine. Sulfur is provided by the thiocarboxylate moiety of the carrier protein ThiS. In vitro, sulfur can be provided by H(2)S. This is Thiazole synthase from Escherichia coli O6:H1 (strain CFT073 / ATCC 700928 / UPEC).